The primary structure comprises 372 residues: Chaperone protein DnaJ (372 aa).

The J domain maps to 5 to 70 (DYYDVLGVER…QKRANYDQYG (66 aa)). The segment at 130-208 (GTTKDIQINT…CHGDGRVHKK (79 aa)) adopts a CR-type zinc-finger fold. Residues cysteine 143, cysteine 146, cysteine 160, cysteine 163, cysteine 182, cysteine 185, cysteine 196, and cysteine 199 each contribute to the Zn(2+) site. 4 CXXCXGXG motif repeats span residues 143-150 (CDSCDGSG), 160-167 (CSTCHGAG), 182-189 (CPSCHGSG), and 196-203 (CKSCHGDG).

This sequence belongs to the DnaJ family. In terms of assembly, homodimer. It depends on Zn(2+) as a cofactor.

Its subcellular location is the cytoplasm. In terms of biological role, participates actively in the response to hyperosmotic and heat shock by preventing the aggregation of stress-denatured proteins and by disaggregating proteins, also in an autonomous, DnaK-independent fashion. Unfolded proteins bind initially to DnaJ; upon interaction with the DnaJ-bound protein, DnaK hydrolyzes its bound ATP, resulting in the formation of a stable complex. GrpE releases ADP from DnaK; ATP binding to DnaK triggers the release of the substrate protein, thus completing the reaction cycle. Several rounds of ATP-dependent interactions between DnaJ, DnaK and GrpE are required for fully efficient folding. Also involved, together with DnaK and GrpE, in the DNA replication of plasmids through activation of initiation proteins. The polypeptide is Chaperone protein DnaJ (Pasteurella multocida (strain Pm70)).